The following is a 303-amino-acid chain: Bifunctional protein FolD (303 aa).

NADP(+)-binding positions include 165-167 (GRS), S190, and I231.

It belongs to the tetrahydrofolate dehydrogenase/cyclohydrolase family. Homodimer.

The catalysed reaction is (6R)-5,10-methylene-5,6,7,8-tetrahydrofolate + NADP(+) = (6R)-5,10-methenyltetrahydrofolate + NADPH. The enzyme catalyses (6R)-5,10-methenyltetrahydrofolate + H2O = (6R)-10-formyltetrahydrofolate + H(+). The protein operates within one-carbon metabolism; tetrahydrofolate interconversion. Its function is as follows. Catalyzes the oxidation of 5,10-methylenetetrahydrofolate to 5,10-methenyltetrahydrofolate and then the hydrolysis of 5,10-methenyltetrahydrofolate to 10-formyltetrahydrofolate. This is Bifunctional protein FolD from Prochlorococcus marinus (strain NATL2A).